Reading from the N-terminus, the 668-residue chain is tRNA 5-methylaminomethyl-2-thiouridine biosynthesis bifunctional protein MnmC (668 aa).

The tract at residues 1-245 is tRNA (mnm(5)s(2)U34)-methyltransferase; it reads MKHYSIQPAN…KREMLCGVME (245 aa). Residues 270 to 668 are FAD-dependent cmnm(5)s(2)U34 oxidoreductase; that stretch reads IGGGIASALL…LLKGKAVKAG (399 aa).

The protein in the N-terminal section; belongs to the methyltransferase superfamily. tRNA (mnm(5)s(2)U34)-methyltransferase family. This sequence in the C-terminal section; belongs to the DAO family. FAD is required as a cofactor.

The protein localises to the cytoplasm. The catalysed reaction is 5-aminomethyl-2-thiouridine(34) in tRNA + S-adenosyl-L-methionine = 5-methylaminomethyl-2-thiouridine(34) in tRNA + S-adenosyl-L-homocysteine + H(+). Functionally, catalyzes the last two steps in the biosynthesis of 5-methylaminomethyl-2-thiouridine (mnm(5)s(2)U) at the wobble position (U34) in tRNA. Catalyzes the FAD-dependent demodification of cmnm(5)s(2)U34 to nm(5)s(2)U34, followed by the transfer of a methyl group from S-adenosyl-L-methionine to nm(5)s(2)U34, to form mnm(5)s(2)U34. The protein is tRNA 5-methylaminomethyl-2-thiouridine biosynthesis bifunctional protein MnmC of Escherichia coli (strain UTI89 / UPEC).